The sequence spans 100 residues: Putative pterin-4-alpha-carbinolamine dehydratase (100 aa).

Belongs to the pterin-4-alpha-carbinolamine dehydratase family.

The catalysed reaction is (4aS,6R)-4a-hydroxy-L-erythro-5,6,7,8-tetrahydrobiopterin = (6R)-L-erythro-6,7-dihydrobiopterin + H2O. The protein is Putative pterin-4-alpha-carbinolamine dehydratase of Rhodopseudomonas palustris (strain TIE-1).